The following is a 728-amino-acid chain: 1,4-alpha-glucan branching enzyme GlgB (728 aa).

Residue aspartate 405 is the Nucleophile of the active site. Residue glutamate 458 is the Proton donor of the active site.

It belongs to the glycosyl hydrolase 13 family. GlgB subfamily. In terms of assembly, monomer.

It catalyses the reaction Transfers a segment of a (1-&gt;4)-alpha-D-glucan chain to a primary hydroxy group in a similar glucan chain.. The protein operates within glycan biosynthesis; glycogen biosynthesis. Catalyzes the formation of the alpha-1,6-glucosidic linkages in glycogen by scission of a 1,4-alpha-linked oligosaccharide from growing alpha-1,4-glucan chains and the subsequent attachment of the oligosaccharide to the alpha-1,6 position. The protein is 1,4-alpha-glucan branching enzyme GlgB of Salmonella paratyphi A (strain ATCC 9150 / SARB42).